The primary structure comprises 1174 residues: Ankyrin repeat and LEM domain-containing protein 2 homolog (1174 aa).

Low complexity-rich tracts occupy residues 37–56 (NPAS…SAAS), 150–164 (SSPT…SSPT), 174–198 (LGSN…SSSN), and 205–219 (QQQM…PQQP). Disordered stretches follow at residues 37 to 74 (NPAS…YEDP) and 141 to 230 (PIIS…PFRA). The stretch at 338–367 (RGETPLHFAAKNGHVAMVEVLVSYPECKSL) is one ANK repeat. Disordered stretches follow at residues 519 to 543 (AEAT…HNNN) and 961 to 981 (GSSS…SPGI). Over residues 521 to 532 (ATSSPKPTKNVP) the composition is skewed to polar residues. A compositionally biased stretch (low complexity) spans 533–543 (NGTNECEHNNN).

This sequence belongs to the ANKLE2 family.

The protein localises to the endoplasmic reticulum. It is found in the nucleus envelope. The protein resides in the cytoplasm. Its function is as follows. Involved in brain development probably by regulating asymmetric division of neuroblasts. Regulates neuroblast asymmetric cell division by controlling asymmetric protein localization of Mira, Baz, Par-6 and aPKC, and spindle alignment. Also, regulates the localization of kinase Ball during mitosis, specifically maintaining Ball in the nucleus during interphase. Required for proper ER and nuclear envelope morphology in neuroblasts. In Drosophila melanogaster (Fruit fly), this protein is Ankyrin repeat and LEM domain-containing protein 2 homolog.